A 256-amino-acid chain; its full sequence is MEGEDLGSWLGLGIGGGGYAYGGDDCRRSPSSPSPVQMLFSQHVKEEITRGYDHGRDEEQASGSKIMKGERGARLRVMRSIRNSGGDGSRSRVLSLGDDGGDGGSGGGGGGGTRKKLQLTKEQSTLLEDSFRVHNILSHAQKHELARQLKLKPRQVEVWFQNRRARTKLKQTEVDCEFLKRCCESLTEENKQLKHELMELRRLASPAAAAAGSQLYVQFPRAAAAAMVNVCPSCEKVTVMGGGGGETGKSSSSYSS.

The tract at residues 52–116 is disordered; it reads YDHGRDEEQA…GGGGGGTRKK (65 aa). Over residues 102-112 the composition is skewed to gly residues; sequence DGGSGGGGGGG. The homeobox DNA-binding region spans 112–171; sequence GTRKKLQLTKEQSTLLEDSFRVHNILSHAQKHELARQLKLKPRQVEVWFQNRRARTKLKQ. Residues 170–214 are leucine-zipper; it reads KQTEVDCEFLKRCCESLTEENKQLKHELMELRRLASPAAAAAGSQ.

It belongs to the HD-ZIP homeobox family. Class II subfamily. As to expression, expressed in roots, leaf sheaths and blades and panicles.

The protein localises to the nucleus. Functionally, probable transcription factor. The sequence is that of Homeobox-leucine zipper protein HOX18 (HOX18) from Oryza sativa subsp. japonica (Rice).